A 255-amino-acid chain; its full sequence is 14-3-3 protein epsilon (255 aa).

Methionine 1 carries the post-translational modification N-acetylmethionine. Position 50 is an N6-acetyllysine; alternate (lysine 50). Lysine 50 is covalently cross-linked (Glycyl lysine isopeptide (Lys-Gly) (interchain with G-Cter in SUMO2); alternate). At serine 65 the chain carries Phosphoserine. An N6-acetyllysine mark is found at lysine 69, lysine 118, and lysine 123. Residue tyrosine 131 is modified to Phosphotyrosine. Threonine 137 carries the post-translational modification Phosphothreonine. Serine 210 is subject to Phosphoserine. The residue at position 232 (threonine 232) is a Phosphothreonine. A disordered region spans residues 234–255 (DMQGDGEEQNKEALQDVEDENQ).

It belongs to the 14-3-3 family. Homodimer. Heterodimerizes with YWHAZ. Interacts with PKA-phosphorylated AANAT. Interacts with ABL1 (phosphorylated form); the interaction retains it in the cytoplasm. Interacts with ARHGEF28. Interacts with BEX3. Weakly interacts with CDKN1B. Interacts with the 'Thr-369' phosphorylated form of DAPK2. Interacts with DENND1A. Interacts with GAB2. Interacts with phosphorylated GRB10. Interacts with KSR1. Interacts with NDEL1. Interacts with PI4KB, TBC1D22A and TBC1D22B. Interacts with the phosphorylated (by AKT1) form of SRPK2. Interacts with TIAM2. Interacts with the 'Ser-1134' and 'Ser-1161' phosphorylated form of SOS1. Interacts with ZFP36 (via phosphorylated form). Interacts with SLITRK1. Interacts with HSF1 (via phosphorylated form); this interaction promotes HSF1 sequestration in the cytoplasm in a ERK-dependent manner. Interacts with RIPOR2. Interacts with KLHL22; required for the nuclear localization of KLHL22 upon amino acid starvation. Interacts with CRTC1. Interacts with CRTC2 (probably when phosphorylated at 'Ser-171'). Interacts with CRTC3 (probably when phosphorylated at 'Ser-162' and/or 'Ser-273'). Interacts with ATP2B1 and ATP2B3; this interaction inhibits calcium-transporting ATPase activity. Interacts with MEFV. Interacts with RNF115. Interacts with GPR15; this interaction promotes ER-to-Golgi transport of GPR15.

The protein localises to the nucleus. It localises to the cytoplasm. It is found in the melanosome. Adapter protein implicated in the regulation of a large spectrum of both general and specialized signaling pathways. Binds to a large number of partners, usually by recognition of a phosphoserine or phosphothreonine motif. Binding generally results in the modulation of the activity of the binding partner. Positively regulates phosphorylated protein HSF1 nuclear export to the cytoplasm. The protein is 14-3-3 protein epsilon (Ywhae) of Rattus norvegicus (Rat).